The chain runs to 359 residues: DNA polymerase IV (359 aa).

The UmuC domain occupies 6 to 186 (IIHVDMDAFY…LPIEAFWGVG (181 aa)). 2 residues coordinate Mg(2+): Asp-10 and Asp-104. Glu-105 is an active-site residue.

This sequence belongs to the DNA polymerase type-Y family. As to quaternary structure, monomer. The cofactor is Mg(2+).

The protein localises to the cytoplasm. The catalysed reaction is DNA(n) + a 2'-deoxyribonucleoside 5'-triphosphate = DNA(n+1) + diphosphate. In terms of biological role, poorly processive, error-prone DNA polymerase involved in untargeted mutagenesis. Copies undamaged DNA at stalled replication forks, which arise in vivo from mismatched or misaligned primer ends. These misaligned primers can be extended by PolIV. Exhibits no 3'-5' exonuclease (proofreading) activity. May be involved in translesional synthesis, in conjunction with the beta clamp from PolIII. The chain is DNA polymerase IV from Akkermansia muciniphila (strain ATCC BAA-835 / DSM 22959 / JCM 33894 / BCRC 81048 / CCUG 64013 / CIP 107961 / Muc).